A 213-amino-acid chain; its full sequence is uncharacterized protein (213 aa).

Residues G53, E74, and D97 each coordinate S-adenosyl-L-methionine.

The protein belongs to the methyltransferase superfamily. YrrT family.

Its function is as follows. Could be a S-adenosyl-L-methionine-dependent methyltransferase. This is an uncharacterized protein from Bacillus subtilis (strain 168).